Here is a 368-residue protein sequence, read N- to C-terminus: Ribosomal RNA large subunit methyltransferase M (368 aa).

S-adenosyl-L-methionine is bound by residues S192, 225-228 (APGG), D244, D264, and D281. Residue K310 is the Proton acceptor of the active site.

This sequence belongs to the class I-like SAM-binding methyltransferase superfamily. RNA methyltransferase RlmE family. RlmM subfamily. As to quaternary structure, monomer.

The protein resides in the cytoplasm. The catalysed reaction is cytidine(2498) in 23S rRNA + S-adenosyl-L-methionine = 2'-O-methylcytidine(2498) in 23S rRNA + S-adenosyl-L-homocysteine + H(+). In terms of biological role, catalyzes the 2'-O-methylation at nucleotide C2498 in 23S rRNA. The polypeptide is Ribosomal RNA large subunit methyltransferase M (Colwellia psychrerythraea (strain 34H / ATCC BAA-681) (Vibrio psychroerythus)).